The following is a 444-amino-acid chain: Tubulin beta-7 chain (444 aa).

Residues glutamine 11, glutamate 69, serine 138, glycine 142, threonine 143, glycine 144, asparagine 204, and asparagine 226 each contribute to the GTP site. Glutamate 69 is a binding site for Mg(2+).

The protein belongs to the tubulin family. As to quaternary structure, dimer of alpha and beta chains. A typical microtubule is a hollow water-filled tube with an outer diameter of 25 nm and an inner diameter of 15 nM. Alpha-beta heterodimers associate head-to-tail to form protofilaments running lengthwise along the microtubule wall with the beta-tubulin subunit facing the microtubule plus end conferring a structural polarity. Microtubules usually have 13 protofilaments but different protofilament numbers can be found in some organisms and specialized cells. The cofactor is Mg(2+). In terms of tissue distribution, expressed in roots, leaf sheaths, and suspension cultured cells.

The protein localises to the cytoplasm. It is found in the cytoskeleton. Functionally, tubulin is the major constituent of microtubules, a cylinder consisting of laterally associated linear protofilaments composed of alpha- and beta-tubulin heterodimers. Microtubules grow by the addition of GTP-tubulin dimers to the microtubule end, where a stabilizing cap forms. Below the cap, tubulin dimers are in GDP-bound state, owing to GTPase activity of alpha-tubulin. The sequence is that of Tubulin beta-7 chain (TUBB7) from Oryza sativa subsp. japonica (Rice).